A 286-amino-acid chain; its full sequence is ATP synthase gamma chain (286 aa).

It belongs to the ATPase gamma chain family. F-type ATPases have 2 components, CF(1) - the catalytic core - and CF(0) - the membrane proton channel. CF(1) has five subunits: alpha(3), beta(3), gamma(1), delta(1), epsilon(1). CF(0) has three main subunits: a, b and c.

Its subcellular location is the cell membrane. In terms of biological role, produces ATP from ADP in the presence of a proton gradient across the membrane. The gamma chain is believed to be important in regulating ATPase activity and the flow of protons through the CF(0) complex. In Oceanobacillus iheyensis (strain DSM 14371 / CIP 107618 / JCM 11309 / KCTC 3954 / HTE831), this protein is ATP synthase gamma chain.